Here is a 526-residue protein sequence, read N- to C-terminus: Bifunctional purine biosynthesis protein PurH (526 aa).

The 148-residue stretch at 1–148 (MQRPIIIRRA…KNYSNVVVVV (148 aa)) folds into the MGS-like domain.

The protein belongs to the PurH family.

The catalysed reaction is (6R)-10-formyltetrahydrofolate + 5-amino-1-(5-phospho-beta-D-ribosyl)imidazole-4-carboxamide = 5-formamido-1-(5-phospho-D-ribosyl)imidazole-4-carboxamide + (6S)-5,6,7,8-tetrahydrofolate. It carries out the reaction IMP + H2O = 5-formamido-1-(5-phospho-D-ribosyl)imidazole-4-carboxamide. Its pathway is purine metabolism; IMP biosynthesis via de novo pathway; 5-formamido-1-(5-phospho-D-ribosyl)imidazole-4-carboxamide from 5-amino-1-(5-phospho-D-ribosyl)imidazole-4-carboxamide (10-formyl THF route): step 1/1. It participates in purine metabolism; IMP biosynthesis via de novo pathway; IMP from 5-formamido-1-(5-phospho-D-ribosyl)imidazole-4-carboxamide: step 1/1. The polypeptide is Bifunctional purine biosynthesis protein PurH (Baumannia cicadellinicola subsp. Homalodisca coagulata).